The primary structure comprises 185 residues: Ribosome-recycling factor (185 aa).

The protein belongs to the RRF family.

The protein localises to the cytoplasm. Responsible for the release of ribosomes from messenger RNA at the termination of protein biosynthesis. May increase the efficiency of translation by recycling ribosomes from one round of translation to another. This is Ribosome-recycling factor from Bacillus cereus (strain B4264).